The sequence spans 2332 residues: Phosphatidylinositol phosphatase PTPRQ (2332 aa).

Positions 1 to 35 are cleaved as a signal peptide; it reads MKKVPIKPEQPEKLRAFNISTHSFSLHWSLPSGHV. Fibronectin type-III domains follow at residues 36–99, 100–195, 199–294, 350–438, 441–539, 514–606, 610–705, 710–799, 804–894, 899–988, 993–1093, 1098–1190, 1192–1282, 1287–1380, 1384–1470, 1474–1578, 1583–1681, and 1686–1787; these read ERYQ…TKPG, PPVF…TAES, KVVN…SSST, PPQN…PPDV, AVFD…SHPD, GLYE…SVRT, VPSS…TSED, SPQD…TSET, APEN…TEED, PPQD…TPEG, PPKD…TDQD, FVGN…TEED, PETS…TDES, PPQN…TQES, VVQN…LPET, VPTN…TLPG, PPEN…TLES, and PPNN…IKAP. At 36–1947 the chain is on the extracellular side; the sequence is ERYQVDLVPD…GEGLSERTVE (1912 aa). N-linked (GlcNAc...) asparagine glycosylation occurs at Asn94. N-linked (GlcNAc...) asparagine glycans are attached at residues Asn202 and Asn394. 4 N-linked (GlcNAc...) asparagine glycosylation sites follow: Asn944, Asn1038, Asn1080, and Asn1101. Residues Asn1290 and Asn1295 are each glycosylated (N-linked (GlcNAc...) asparagine). Asn1844 is a glycosylation site (N-linked (GlcNAc...) asparagine). The helical transmembrane segment at 1948-1968 threads the bilayer; that stretch reads IILSVTLCILSIILLGTAIFA. At 1969-2332 the chain is on the cytoplasmic side; that stretch reads FARIRQKQKE…VELEWEETTM (364 aa). One can recognise a Tyrosine-protein phosphatase domain in the interval 2036–2292; the sequence is FQEEFSELPK…IFLHQCILDL (257 aa). Cys2233 acts as the Phosphocysteine intermediate in catalysis.

Belongs to the protein-tyrosine phosphatase family. Receptor class 2A subfamily. As to quaternary structure, interacts with TPRN. TPRN, CLIC5 and PTPQR form concentric rings at the base of stereocilia and may form a complex. In terms of tissue distribution, in developing kidney, it localizes to the basal membrane of podocytes, beginning when podocyte progenitors can first be identified in the embryonic kidney (at protein level). Expressed in lung and kidney.

Its subcellular location is the cell projection. It is found in the stereocilium. It localises to the apical cell membrane. The protein localises to the basal cell membrane. It catalyses the reaction a 1,2-diacyl-sn-glycero-3-phospho-(1D-myo-inositol-3,4,5-trisphosphate) + H2O = a 1,2-diacyl-sn-glycero-3-phospho-(1D-myo-inositol-4,5-bisphosphate) + phosphate. It carries out the reaction a 1,2-diacyl-sn-glycero-3-phospho-(1D-myo-inositol-3,4,5-trisphosphate) + H2O = a 1,2-diacyl-sn-glycero-3-phospho-(1D-myo-inositol-3,4-bisphosphate) + phosphate. The enzyme catalyses a 1,2-diacyl-sn-glycero-3-phospho-(1D-myo-inositol-3,5-bisphosphate) + H2O = a 1,2-diacyl-sn-glycero-3-phospho-(1D-myo-inositol-5-phosphate) + phosphate. The catalysed reaction is a 1,2-diacyl-sn-glycero-3-phospho-(1D-myo-inositol-3,5-bisphosphate) + H2O = a 1,2-diacyl-sn-glycero-3-phospho-(1D-myo-inositol-3-phosphate) + phosphate. In terms of biological role, dephosphorylates phosphatidylinositol phosphates, such as phosphatidylinositol 3,4,5-trisphosphate (PIP3) and phosphatidylinositol 3,5-diphosphates, with preference for PIP3. Phosphate can be hydrolyzed from the D3 and D5 positions in the inositol ring. Has low tyrosine-protein phosphatase activity in vitro; however, the relevance of such activity in vivo is unclear. Plays an important role in adipogenesis of mesenchymal stem cells (MSCs). Regulates the phosphorylation state of AKT1 by regulating the levels of PIP3 in MSCs and preadipocyte cells. Required for hair bundle maturation, a process that enables hair cells to detect and transmit sound and balance signals effectively, therefore affecting auditory function. May act by regulating the level of phosphatidylinositol 4,5-bisphosphate (PIP2) level in the basal region of hair bundles. The polypeptide is Phosphatidylinositol phosphatase PTPRQ (PTPRQ) (Homo sapiens (Human)).